A 382-amino-acid polypeptide reads, in one-letter code: UDP-4-amino-4-deoxy-L-arabinose--oxoglutarate aminotransferase (382 aa).

Position 183 is an N6-(pyridoxal phosphate)lysine (Lys-183).

It belongs to the DegT/DnrJ/EryC1 family. ArnB subfamily. As to quaternary structure, homodimer. The cofactor is pyridoxal 5'-phosphate.

It catalyses the reaction UDP-4-amino-4-deoxy-beta-L-arabinose + 2-oxoglutarate = UDP-beta-L-threo-pentopyranos-4-ulose + L-glutamate. Its pathway is nucleotide-sugar biosynthesis; UDP-4-deoxy-4-formamido-beta-L-arabinose biosynthesis; UDP-4-deoxy-4-formamido-beta-L-arabinose from UDP-alpha-D-glucuronate: step 2/3. The protein operates within bacterial outer membrane biogenesis; lipopolysaccharide biosynthesis. Functionally, catalyzes the conversion of UDP-4-keto-arabinose (UDP-Ara4O) to UDP-4-amino-4-deoxy-L-arabinose (UDP-L-Ara4N). The modified arabinose is attached to lipid A and is required for resistance to polymyxin and cationic antimicrobial peptides. This Pseudomonas aeruginosa (strain LESB58) protein is UDP-4-amino-4-deoxy-L-arabinose--oxoglutarate aminotransferase.